Here is a 641-residue protein sequence, read N- to C-terminus: Protein BCAP (641 aa).

4 coiled-coil regions span residues 83-144, 191-270, 299-375, and 487-599; these read HWPV…KQND, EKDN…RKLE, QKQK…EREQ, and FKLE…TLNA.

The protein belongs to the ODF2 family.

Its subcellular location is the cytoplasm. The protein resides in the cytoskeleton. It localises to the microtubule organizing center. The protein localises to the centrosome. It is found in the centriole. Its subcellular location is the centriolar satellite. The protein resides in the cilium basal body. In terms of biological role, acts as a suppressor of ciliogenesis, specifically, the initiation of ciliogenesis. The protein is Protein BCAP (odf2l) of Xenopus laevis (African clawed frog).